The chain runs to 282 residues: Formate channel FocB (282 aa).

The Cytoplasmic segment spans residues 1–35 (MRNKLSFDLQLSARKAAIAERIAAHKIARSKVSVF). A helical membrane pass occupies residues 36-56 (LMAMSAGVFMAIGFTFYLSVI). At 57-68 (ADAPSSQALTHL) the chain is on the periplasmic side. A helical transmembrane segment spans residues 69 to 89 (VGGLCFTLGFILLAVCGTSLF). The Cytoplasmic segment spans residues 90–112 (TSSVMTVMAKSRGVISWRTWLIN). A helical membrane pass occupies residues 113–133 (ALLVACGNLAGIACFSLLIWF). The Periplasmic segment spans residues 134–163 (SGLVMSENAMWGVAVLHCAEGKMHHTFTES). A helical transmembrane segment spans residues 164-184 (VSLGIMCNLMVCLALWMSYCG). Residues 185-190 (RSLCDK) lie on the Cytoplasmic side of the membrane. A helical transmembrane segment spans residues 191-211 (IVAMILPITLFVASGFEHCIA). Residues 212-248 (NLFVIPFAIAIRHFAPPPFWQLAHSSADNFPALTVSH) lie on the Periplasmic side of the membrane. Residues 249 to 269 (FITANLLPVMLGNIIGGAVLV) form a helical membrane-spanning segment. Over 270–282 (SMCYRAIYLRQEP) the chain is Cytoplasmic.

This sequence belongs to the FNT transporter (TC 1.A.16) family.

The protein localises to the cell inner membrane. It catalyses the reaction formate(in) = formate(out). Its activity is regulated as follows. The direction of formate translocation depends on external pH and electron donor source. Its function is as follows. Involved in the bidirectional transport of formate during mixed-acid fermentation. The protein is Formate channel FocB of Escherichia coli (strain K12).